Here is a 120-residue protein sequence, read N- to C-terminus: Small ribosomal subunit protein uS13 (120 aa).

Residues 93–120 form a disordered region; the sequence is RKGLPVRGQTTKNNARTRKGKKKTVGSK. A compositionally biased stretch (basic residues) spans 107–120; that stretch reads ARTRKGKKKTVGSK.

It belongs to the universal ribosomal protein uS13 family. In terms of assembly, part of the 30S ribosomal subunit. Forms a loose heterodimer with protein S19. Forms two bridges to the 50S subunit in the 70S ribosome.

Located at the top of the head of the 30S subunit, it contacts several helices of the 16S rRNA. In the 70S ribosome it contacts the 23S rRNA (bridge B1a) and protein L5 of the 50S subunit (bridge B1b), connecting the 2 subunits; these bridges are implicated in subunit movement. Contacts the tRNAs in the A and P-sites. The protein is Small ribosomal subunit protein uS13 of Helicobacter pylori (strain P12).